Here is a 392-residue protein sequence, read N- to C-terminus: Y' element ATP-dependent helicase YFL066C (392 aa).

The region spanning 1–175 (MADTPSVAVQ…LQRIGLTGLA (175 aa)) is the Helicase ATP-binding domain. Residue 11–18 (APPGYGKT) coordinates ATP. The Helicase C-terminal domain maps to 232–381 (KLLLALFEIE…EFYGLESKKG (150 aa)).

It belongs to the helicase family. Yeast subtelomeric Y' repeat subfamily.

In terms of biological role, catalyzes DNA unwinding and is involved in telomerase-independent telomere maintenance. This Saccharomyces cerevisiae (strain ATCC 204508 / S288c) (Baker's yeast) protein is Y' element ATP-dependent helicase YFL066C.